The following is a 106-amino-acid chain: A-type ATP synthase subunit F (106 aa).

It belongs to the V-ATPase F subunit family. Has multiple subunits with at least A(3), B(3), C, D, E, F, H, I and proteolipid K(x).

It is found in the cell membrane. Its function is as follows. Component of the A-type ATP synthase that produces ATP from ADP in the presence of a proton gradient across the membrane. This is A-type ATP synthase subunit F from Methanosphaera stadtmanae (strain ATCC 43021 / DSM 3091 / JCM 11832 / MCB-3).